The chain runs to 60 residues: Arabinogalactan protein 12 (60 aa).

Residues 1 to 27 (MESMKMKLIVVLMVAIVAFSAVGNVAA) form the signal peptide. Gln-28 carries the post-translational modification Pyrrolidone carboxylic acid. Pro-32, Pro-34, and Pro-36 each carry 4-hydroxyproline. O-linked (Ara...) hydroxyproline glycans are attached at residues Pro-32, Pro-34, and Pro-36. Residue Ser-38 is the site of GPI-anchor amidated serine attachment. Positions 39–60 (DAAMFVPALFASVAALASGFLF) are cleaved as a propeptide — removed in mature form.

Belongs to the AG-peptide AGP family. Contains 4-hydroxyproline; hydroxylated on Pro-32, Pro-34 and Pro-36. Post-translationally, O-glycosylated on hydroxyprolines; noncontiguous hydroxylproline residues are glycosylated with arabinogalactan. Expressed in reproductive tissues. Expressed in chalaza, funiculus, stigma, septum, style and transmitting tract.

The protein resides in the cell membrane. Proteoglycan that seems to be implicated in diverse developmental roles such as differentiation, cell-cell recognition, embryogenesis and programmed cell death. The protein is Arabinogalactan protein 12 of Arabidopsis thaliana (Mouse-ear cress).